We begin with the raw amino-acid sequence, 335 residues long: Transcription factor IIIA (335 aa).

C2H2-type zinc fingers lie at residues 13–37 (YICS…LCKH), 43–67 (FPCT…SMTH), 73–98 (CKCD…QRAH), 105–129 (YECY…QYIH), 135–159 (FKCN…EKVH), 162–188 (YPCQ…AASH), 192–214 (TICD…KRTH), 221–246 (YKCP…LSFH), and 252–276 (FACG…ANTH). Basic and acidic residues predominate over residues 269–280 (LDRHANTHDPEK). The interval 269–335 (LDRHANTHDP…ATAMQNLSIK (67 aa)) is disordered. Basic residues predominate over residues 281–292 (KKMKKPRPKKSL).

The protein resides in the nucleus. In terms of biological role, involved in ribosomal large subunit biogenesis. Interacts with the internal control region (ICR) of approximately 50 bases within the 5S RNA genes, is required for correct transcription of these genes by RNA polymerase III. Also binds the transcribed 5S RNA's. In Lithobates pipiens (Northern leopard frog), this protein is Transcription factor IIIA (gtf3a).